The primary structure comprises 307 residues: D-alanine--D-alanine ligase (307 aa).

The region spanning 101–301 (RDVLAAAGVP…FGELVRWMVD (201 aa)) is the ATP-grasp domain. 128–182 (LPPPYVIKPLGEGSSFGVFIVREDQAYPPQELTRSDWAFGNRVLVESYIGGRELT) is a binding site for ATP. Residues Asp-251, Glu-268, and Asn-270 each coordinate Mg(2+).

The protein belongs to the D-alanine--D-alanine ligase family. Requires Mg(2+) as cofactor. Mn(2+) is required as a cofactor.

The protein resides in the cytoplasm. It carries out the reaction 2 D-alanine + ATP = D-alanyl-D-alanine + ADP + phosphate + H(+). Its pathway is cell wall biogenesis; peptidoglycan biosynthesis. Its function is as follows. Cell wall formation. The protein is D-alanine--D-alanine ligase of Beijerinckia indica subsp. indica (strain ATCC 9039 / DSM 1715 / NCIMB 8712).